A 354-amino-acid polypeptide reads, in one-letter code: Glycine betaine/proline betaine transport system permease protein ProW (354 aa).

The segment at 1 to 28 (MADQTNPWDTAQVADTTTQTADAWGTPA) is disordered. The Cytoplasmic portion of the chain corresponds to 1 to 99 (MADQTNPWDT…VDYILNGFQQ (99 aa)). The span at 9–23 (DTAQVADTTTQTADA) shows a compositional bias: low complexity. The chain crosses the membrane as a helical span at residues 100 to 120 (LLLGMPAPVAIILFALIAWQV). A topological domain (periplasmic) is located at residue S121. A helical transmembrane segment spans residues 122–142 (GVGMGIATLISLIAIGAIGAW). Residues 143-148 (SQAMIT) are Cytoplasmic-facing. Residues 145-324 (AMITLALVLT…ILAIILDRLT (180 aa)) enclose the ABC transmembrane type-1 domain. The chain crosses the membrane as a helical span at residues 149-169 (LALVLTALLFCVVIGLPMGIW). Topologically, residues 170–198 (LARSPRAAKIVRPLLDAMQTTPAFVYLVP) are periplasmic. The helical transmembrane segment at 199–219 (IVMLFGIGNVPGVVVTIIFAL) threads the bilayer. Topologically, residues 220 to 270 (PPIVRLTILGINQVPADLIEASRSFGASPRQMLFKVQLPLAMPTIMAGVNQ) are cytoplasmic. A helical transmembrane segment spans residues 271–291 (TLMLALSMVVIASMIAVGGLG). At 292–300 (QMVLRGIGR) the chain is on the periplasmic side. The chain crosses the membrane as a helical span at residues 301–321 (LDMGLATVGGVGIVILAIILD). Residues 322-354 (RLTQAVGRDSRSRGNRRWYTTGPVGLITRPFVK) are Cytoplasmic-facing.

This sequence belongs to the binding-protein-dependent transport system permease family. CysTW subfamily. As to quaternary structure, the complex is composed of two ATP-binding proteins (ProV), two transmembrane proteins (ProW) and a solute-binding protein (ProX).

The protein resides in the cell inner membrane. Part of the ProU ABC transporter complex involved in glycine betaine and proline betaine uptake. Probably responsible for the translocation of the substrate across the membrane. The protein is Glycine betaine/proline betaine transport system permease protein ProW of Salmonella typhimurium (strain LT2 / SGSC1412 / ATCC 700720).